We begin with the raw amino-acid sequence, 1485 residues long: Glutamate receptor ionotropic, NMDA 2B (1485 aa).

Positions 1–26 are cleaved as a signal peptide; sequence MKPRAECCSPKFWLVLAVLAVSGSRA. At 27 to 557 the chain is on the extracellular side; it reads RSQKSPPSIG…SAFLEPFSAD (531 aa). A glycan (N-linked (GlcNAc...) asparagine) is linked at Asn-74. Cys-86 and Cys-321 are disulfide-bonded. Zn(2+) contacts are provided by His-127 and Glu-284. N-linked (GlcNAc...) asparagine glycosylation is found at Asn-341, Asn-348, Asn-444, and Asn-491. Disulfide bonds link Cys-429-Cys-456 and Cys-436-Cys-457. Residues Thr-514 and Arg-519 each coordinate L-glutamate. The N-linked (GlcNAc...) asparagine glycan is linked to Asn-542. The helical transmembrane segment at 558–576 threads the bilayer; the sequence is VWVMMFVMLLIVSAVAVFV. Over 577–603 the chain is Cytoplasmic; it reads FEYFSPVGYNRCLADGREPGGPSFTIG. Positions 604-623 form an intramembrane region, discontinuously helical; that stretch reads KAIWLLWGLVFNNSVPVQNP. The segment at 604 to 623 is pore-forming; it reads KAIWLLWGLVFNNSVPVQNP. Over 624–630 the chain is Cytoplasmic; that stretch reads KGTTSKI. The chain crosses the membrane as a helical span at residues 631 to 646; it reads MVSVWAFFAVIFLASY. Topologically, residues 647–817 are extracellular; the sequence is TANLAAFMIQ…VMSSQLDIDN (171 aa). Asn-688 carries N-linked (GlcNAc...) asparagine glycosylation. L-glutamate is bound by residues 690-691 and Asp-732; that span reads ST. Residues Cys-746 and Cys-801 are joined by a disulfide bond. The helical transmembrane segment at 818–837 threads the bilayer; sequence MAGVFYMLGAAMALSLITFI. The Cytoplasmic segment spans residues 838 to 1485; it reads CEHLFYWQFR…EKLSSIESDV (648 aa). A phosphoserine mark is found at Ser-882, Ser-886, Ser-917, and Ser-920. A phosphotyrosine mark is found at Tyr-962 and Tyr-1039. Phosphoserine is present on residues Ser-1058, Ser-1061, and Ser-1064. Positions 1074–1097 are disordered; the sequence is EGNAAKRRKQQYKDSLKKRPASAK. A phosphotyrosine mark is found at Tyr-1109 and Tyr-1133. Ser-1143 is subject to Phosphoserine. Phosphotyrosine is present on Tyr-1155. Residues 1162-1194 form a disordered region; sequence FKRDSVSGGGPCTNRSHLKHGAGDKHGVVSGVP. Ser-1255 and Ser-1259 each carry phosphoserine. Residues 1269–1278 show a composition bias toward low complexity; that stretch reads PVAVPSNAPS. The interval 1269-1302 is disordered; that stretch reads PVAVPSNAPSTKYPQSPTNSKAQKKTRNKLRRQH. Residues 1280–1289 show a composition bias toward polar residues; the sequence is KYPQSPTNSK. The segment covering 1290 to 1301 has biased composition (basic residues); that stretch reads AQKKTRNKLRRQ. The tract at residues 1292–1304 is interaction with DAPK1; that stretch reads KKTRNKLRRQHSY. At Ser-1303 the chain carries Phosphoserine; by DAPK1. Tyr-1475 carries the phosphotyrosine modification. Positions 1483–1485 match the PDZ-binding motif; that stretch reads SDV.

This sequence belongs to the glutamate-gated ion channel (TC 1.A.10.1) family. NR2B/GRIN2B subfamily. In terms of assembly, heterotetramer. Forms heterotetrameric channels composed of two GluN1/zeta subunits (GRIN1), and two identical GluN2/epsilon subunits (GRIN2A, GRIN2B, GRIN2C or GRIN2D) or GluN3 subunits (GRIN3A or GRIN3B) (in vitro). Can also form heterotetrameric channels that contain at least two GluN1 subunits and at least two different GluN2 subunits (or a combination of one GluN2 and one GluN3 subunits) (in vitro). In vivo, the subunit composition may depend on the expression levels of the different subunits. Found in a complex with GRIN1, GRIN3A and PPP2CB. Found in a complex with GRIN1 and GRIN3B. Interacts with MAGI3. Interacts with HIP1 and Neto1. Interacts with PDZ domains of PATJ, DLG3 and DLG4. Interacts with DAPK1. Found in a complex with GRIN1 and PRR7. Interacts with PRR7. Interacts with CAMK2A. Interacts with ARC; preventing ARC oligomerization. Interacts with TMEM25. Interacts (via the extreme C-terminus) with FRMPD2 (via the second PDZ domain); the interaction is direct and is likely to promote NMDAR-mediated neural signal transmission. Interacts with FAM81A; the interaction facilitates condensate formation via liquid-liquid phase separation. Post-translationally, phosphorylated on tyrosine residues. Phosphorylation at Ser-1303 by DAPK1 enhances synaptic NMDA receptor channel activity.

It is found in the cell membrane. Its subcellular location is the postsynaptic cell membrane. The protein resides in the cell projection. It localises to the dendrite. The protein localises to the late endosome. It is found in the lysosome. Its subcellular location is the cytoplasm. The protein resides in the cytoskeleton. It catalyses the reaction Ca(2+)(in) = Ca(2+)(out). The catalysed reaction is Na(+)(in) = Na(+)(out). It carries out the reaction K(+)(in) = K(+)(out). Its function is as follows. Component of N-methyl-D-aspartate (NMDA) receptors (NMDARs) that function as heterotetrameric, ligand-gated cation channels with high calcium permeability and voltage-dependent block by Mg(2+). Participates in synaptic plasticity for learning and memory formation by contributing to the long-term depression (LTD) of hippocampus membrane currents. Channel activation requires binding of the neurotransmitter L-glutamate to the GluN2 subunit, glycine or D-serine binding to the GluN1 subunit, plus membrane depolarization to eliminate channel inhibition by Mg(2+). NMDARs mediate simultaneously the potasium efflux and the influx of calcium and sodium. Each GluN2 subunit confers differential attributes to channel properties, including activation, deactivation and desensitization kinetics, pH sensitivity, Ca2(+) permeability, and binding to allosteric modulators. In concert with DAPK1 at extrasynaptic sites, acts as a central mediator for stroke damage. Its phosphorylation at Ser-1303 by DAPK1 enhances synaptic NMDA receptor channel activity inducing injurious Ca2+ influx through them, resulting in an irreversible neuronal death. In Canis lupus familiaris (Dog), this protein is Glutamate receptor ionotropic, NMDA 2B.